Here is a 384-residue protein sequence, read N- to C-terminus: Outer membrane protein assembly factor BamC (384 aa).

The first 23 residues, 1-23 (MNKLNSVVVARGAVAVLLIGLAG), serve as a signal peptide directing secretion. The N-palmitoyl cysteine moiety is linked to residue C24. C24 is lipidated: S-diacylglycerol cysteine. Disordered regions lie at residues 47-70 (LEVP…TSGK) and 251-273 (QAAQ…SGTL).

It belongs to the BamC family. As to quaternary structure, part of the Bam complex.

It is found in the cell outer membrane. Part of the outer membrane protein assembly complex, which is involved in assembly and insertion of beta-barrel proteins into the outer membrane. In Accumulibacter regalis, this protein is Outer membrane protein assembly factor BamC.